The chain runs to 278 residues: MFQPNTIVKVGNIVFSNETPFSLIVGPCQMESRDHAFEMAGRIKTITDQIGIGFVYKSSYDKANRTSLGAARGIGLEKAMAIFSDIKKEFGCPVLTDVHTEEQCAAVGSVVDVLQIPAFLCRQTDLLVAAAKTGRVINIKKGQFLAPWDMENVLKKVTQSGNPHVMLCERGTSFGYNRLISDMRSLPILRSFGAPVIFDATHSVQEPGGQGDSSGGQRQFVEVLARAAVSVGVAGIFLETHQDPDNAPSDGPNMVKIDHLQRLLETLMEFDYLSKKVN.

Belongs to the KdsA family.

It localises to the cytoplasm. The enzyme catalyses D-arabinose 5-phosphate + phosphoenolpyruvate + H2O = 3-deoxy-alpha-D-manno-2-octulosonate-8-phosphate + phosphate. Its pathway is carbohydrate biosynthesis; 3-deoxy-D-manno-octulosonate biosynthesis; 3-deoxy-D-manno-octulosonate from D-ribulose 5-phosphate: step 2/3. The protein operates within bacterial outer membrane biogenesis; lipopolysaccharide biosynthesis. This Bartonella quintana (strain Toulouse) (Rochalimaea quintana) protein is 2-dehydro-3-deoxyphosphooctonate aldolase.